A 488-amino-acid chain; its full sequence is Pup--protein ligase (488 aa).

Residue E33 coordinates Mg(2+). Position 76 (R76) interacts with ATP. A Mg(2+)-binding site is contributed by Y78. D80 acts as the Proton acceptor in catalysis. Position 86 (E86) interacts with Mg(2+). Residues T89 and W453 each contribute to the ATP site.

It belongs to the Pup ligase/Pup deamidase family. Pup-conjugating enzyme subfamily.

It catalyses the reaction ATP + [prokaryotic ubiquitin-like protein]-L-glutamate + [protein]-L-lysine = ADP + phosphate + N(6)-([prokaryotic ubiquitin-like protein]-gamma-L-glutamyl)-[protein]-L-lysine.. It participates in protein degradation; proteasomal Pup-dependent pathway. The protein operates within protein modification; protein pupylation. Catalyzes the covalent attachment of the prokaryotic ubiquitin-like protein modifier Pup to the proteasomal substrate proteins, thereby targeting them for proteasomal degradation. This tagging system is termed pupylation. The ligation reaction involves the side-chain carboxylate of the C-terminal glutamate of Pup and the side-chain amino group of a substrate lysine. The protein is Pup--protein ligase of Bifidobacterium adolescentis (strain ATCC 15703 / DSM 20083 / NCTC 11814 / E194a).